The sequence spans 146 residues: Large ribosomal subunit protein uL15 (146 aa).

Positions 1 to 51 (MQLNTIKPAEGSKKNRRHVGRGIGSGLGKTAGRGHKGQKSRSGGFHKVGFE) are disordered. Residues 21–31 (RGIGSGLGKTA) show a composition bias toward gly residues.

This sequence belongs to the universal ribosomal protein uL15 family. Part of the 50S ribosomal subunit.

In terms of biological role, binds to the 23S rRNA. This Polynucleobacter necessarius subsp. necessarius (strain STIR1) protein is Large ribosomal subunit protein uL15.